The primary structure comprises 339 residues: Type IV secretion system protein PtlH homolog (339 aa).

It belongs to the GSP E family.

This is Type IV secretion system protein PtlH homolog (ptlH) from Bordetella bronchiseptica (strain ATCC BAA-588 / NCTC 13252 / RB50) (Alcaligenes bronchisepticus).